A 641-amino-acid chain; its full sequence is Protein TIC 62, chloroplastic (641 aa).

A chloroplast-targeting transit peptide spans 1 to 63 (MEGTCFLRGQ…LSLRASGPIR (63 aa)). At A64 the chain carries N-acetylalanine. 84 to 113 (VFVAGATGKVGSRTVRELLKLGFRVRAGVR) lines the NADP(+) pocket. Residues 328–641 (SKRPYVPPPK…SPLPSPVTNH (314 aa)) form a disordered region. The segment covering 359–372 (APKEDEAPPKEKNV) has biased composition (basic and acidic residues). 2 tandem repeats follow at residues 376–397 (PLSP…PNST) and 444–465 (PLSP…PTAS). The interval 376–638 (PLSPYASYED…PPTSPLPSPV (263 aa)) is 4 X 22 AA approximate repeats. Low complexity predominate over residues 393–402 (IPNSTTSVSP). Residues 435 to 444 (KQVEEKKERP) show a composition bias toward basic and acidic residues. Residues 485–528 (SSTVAKTVTETAVATSVTETSVATSVPETAVATSVTETAAPATS) show a composition bias toward low complexity. Copy 3 of the repeat occupies 532–553 (PLSPYAIYADLKPPTSPTPAST). Residues 599-612 (AIDTSLASGDNTAQ) show a composition bias toward polar residues. Copy 4 of the repeat occupies 617–638 (PLSPYTMYADMKPPTSPLPSPV). The span at 630 to 641 (PTSPLPSPVTNH) shows a compositional bias: pro residues.

In terms of assembly, part of the Tic complex. Interacts with TIC110 and TIC55. Interacts with LFNR1 and LFNR2. Component of high molecular weight thylakoid LFNRs-containing protein complexes containing LIR1, LFNR1, LFNR2, TIC62 and TROL proteins. Expressed in cotyledons and leaves, but not in roots.

The protein resides in the plastid. The protein localises to the chloroplast inner membrane. Its subcellular location is the chloroplast stroma. It is found in the chloroplast thylakoid. Involved in protein precursor import into chloroplasts. Part of the redox regulon consisting of TIC32, TIC 55 and TIC62. Acts as a membrane anchor of LFNR1 and LFNR2. Has a NADPH-dependent dehydrogenase activity, but only after preincubation with lipids. The polypeptide is Protein TIC 62, chloroplastic (Arabidopsis thaliana (Mouse-ear cress)).